We begin with the raw amino-acid sequence, 359 residues long: Chorismate synthase (359 aa).

Arginine 47 is a binding site for NADP(+). FMN is bound by residues 123 to 125 (RSS), glycine 283, 298 to 302 (KPTSS), and arginine 326.

It belongs to the chorismate synthase family. As to quaternary structure, homotetramer. FMNH2 serves as cofactor.

The catalysed reaction is 5-O-(1-carboxyvinyl)-3-phosphoshikimate = chorismate + phosphate. It functions in the pathway metabolic intermediate biosynthesis; chorismate biosynthesis; chorismate from D-erythrose 4-phosphate and phosphoenolpyruvate: step 7/7. Functionally, catalyzes the anti-1,4-elimination of the C-3 phosphate and the C-6 proR hydrogen from 5-enolpyruvylshikimate-3-phosphate (EPSP) to yield chorismate, which is the branch point compound that serves as the starting substrate for the three terminal pathways of aromatic amino acid biosynthesis. This reaction introduces a second double bond into the aromatic ring system. The polypeptide is Chorismate synthase (Chlamydia caviae (strain ATCC VR-813 / DSM 19441 / 03DC25 / GPIC) (Chlamydophila caviae)).